The sequence spans 328 residues: Phosphate acyltransferase (328 aa).

It belongs to the PlsX family. In terms of assembly, homodimer. Probably interacts with PlsY.

It localises to the cytoplasm. It catalyses the reaction a fatty acyl-[ACP] + phosphate = an acyl phosphate + holo-[ACP]. The protein operates within lipid metabolism; phospholipid metabolism. Catalyzes the reversible formation of acyl-phosphate (acyl-PO(4)) from acyl-[acyl-carrier-protein] (acyl-ACP). This enzyme utilizes acyl-ACP as fatty acyl donor, but not acyl-CoA. In Campylobacter jejuni subsp. jejuni serotype O:23/36 (strain 81-176), this protein is Phosphate acyltransferase.